A 268-amino-acid chain; its full sequence is Tryptophan synthase alpha chain (268 aa).

Residues glutamate 49 and aspartate 60 each act as proton acceptor in the active site.

Belongs to the TrpA family. As to quaternary structure, tetramer of two alpha and two beta chains.

The enzyme catalyses (1S,2R)-1-C-(indol-3-yl)glycerol 3-phosphate + L-serine = D-glyceraldehyde 3-phosphate + L-tryptophan + H2O. It participates in amino-acid biosynthesis; L-tryptophan biosynthesis; L-tryptophan from chorismate: step 5/5. In terms of biological role, the alpha subunit is responsible for the aldol cleavage of indoleglycerol phosphate to indole and glyceraldehyde 3-phosphate. This is Tryptophan synthase alpha chain from Aeromonas salmonicida (strain A449).